A 448-amino-acid chain; its full sequence is N-succinylarginine dihydrolase (448 aa).

Substrate-binding positions include 19-28 (GGLSYGNVAS), Asn-110, and 137-138 (HR). Residue Glu-174 is part of the active site. A substrate-binding site is contributed by Arg-214. His-250 is an active-site residue. Substrate-binding residues include Asp-252 and Asn-365. The Nucleophile role is filled by Cys-371.

The protein belongs to the succinylarginine dihydrolase family. In terms of assembly, homodimer.

It catalyses the reaction N(2)-succinyl-L-arginine + 2 H2O + 2 H(+) = N(2)-succinyl-L-ornithine + 2 NH4(+) + CO2. It participates in amino-acid degradation; L-arginine degradation via AST pathway; L-glutamate and succinate from L-arginine: step 2/5. In terms of biological role, catalyzes the hydrolysis of N(2)-succinylarginine into N(2)-succinylornithine, ammonia and CO(2). The protein is N-succinylarginine dihydrolase of Pseudomonas fluorescens (strain SBW25).